A 189-amino-acid polypeptide reads, in one-letter code: Protein GrpE (189 aa).

The span at 1–10 shows a compositional bias: polar residues; sequence MADEQQQTLD. Residues 1–21 form a disordered region; sequence MADEQQQTLDPQAPEQTDAPE.

The protein belongs to the GrpE family. In terms of assembly, homodimer.

Its subcellular location is the cytoplasm. Participates actively in the response to hyperosmotic and heat shock by preventing the aggregation of stress-denatured proteins, in association with DnaK and GrpE. It is the nucleotide exchange factor for DnaK and may function as a thermosensor. Unfolded proteins bind initially to DnaJ; upon interaction with the DnaJ-bound protein, DnaK hydrolyzes its bound ATP, resulting in the formation of a stable complex. GrpE releases ADP from DnaK; ATP binding to DnaK triggers the release of the substrate protein, thus completing the reaction cycle. Several rounds of ATP-dependent interactions between DnaJ, DnaK and GrpE are required for fully efficient folding. This is Protein GrpE from Pseudomonas paraeruginosa (strain DSM 24068 / PA7) (Pseudomonas aeruginosa (strain PA7)).